The chain runs to 88 residues: Small ribosomal subunit protein uS15c (88 aa).

It belongs to the universal ribosomal protein uS15 family. Part of the 30S ribosomal subunit.

Its subcellular location is the plastid. The protein resides in the chloroplast. This chain is Small ribosomal subunit protein uS15c (rps15), found in Aethionema cordifolium (Lebanon stonecress).